We begin with the raw amino-acid sequence, 218 residues long: Redox-sensing transcriptional repressor Rex (218 aa).

A DNA-binding region (H-T-H motif) is located at residues 18-57; sequence LYYRFIQSLHASGKQRVSSAELSEAVKVDSATIRRDFSYF. 92–97 contributes to the NAD(+) binding site; the sequence is GVGHLG.

The protein belongs to the transcriptional regulatory Rex family. As to quaternary structure, homodimer.

The protein localises to the cytoplasm. Its function is as follows. Modulates transcription in response to changes in cellular NADH/NAD(+) redox state. The chain is Redox-sensing transcriptional repressor Rex from Exiguobacterium sp. (strain ATCC BAA-1283 / AT1b).